The chain runs to 265 residues: Novel plant SNARE 12 (265 aa).

The Cytoplasmic segment spans residues 1–217 (MASELPMSPH…IGRQVATDKC (217 aa)). Residues 32 to 106 (LDKIKDSSRQ…ALRKTYLNTL (75 aa)) adopt a coiled-coil conformation. At serine 74 the chain carries Phosphoserine. The region spanning 146-208 (MKRMDETDQA…KKASQLVKEI (63 aa)) is the t-SNARE coiled-coil homology domain. Residues 218 to 238 (IMAFLFLIVCGVIAIIIVKIV) form a helical; Anchor for type IV membrane protein membrane-spanning segment. Residues 239-265 (NPNNKDIRDIPGLAPPAQSRKLLYFRE) are Vesicular-facing.

This sequence belongs to the novel plant SNARE family. As to expression, expressed in roots, stems, flower, siliques and leaves.

Its subcellular location is the membrane. In terms of biological role, vesicle trafficking protein that functions in the secretory pathway. The sequence is that of Novel plant SNARE 12 (NPSN12) from Arabidopsis thaliana (Mouse-ear cress).